The primary structure comprises 399 residues: Bone morphogenetic protein 8A (399 aa).

Residues 1-19 (MAMRPGPLWLLGLALCALG) form the signal peptide. Residues 20 to 260 (GGHGPRPPHT…ASQSPVRAPR (241 aa)) constitute a propeptide that is removed on maturation. Residue Asn155 is glycosylated (N-linked (GlcNAc...) asparagine). The interval 257–286 (RAPRAARPLKRRQPKKTNELPHPNKLPGIF) is disordered. 3 cysteine pairs are disulfide-bonded: Cys298–Cys364, Cys327–Cys396, and Cys331–Cys398. N-linked (GlcNAc...) asparagine glycosylation occurs at Asn340.

It belongs to the TGF-beta family. In terms of assembly, homodimer; disulfide-linked. In terms of tissue distribution, expressed in testis. expressed in trophoblast cells of the labyrinthine region of the placenta and in the inner root sheath of hair follicles of early postnatal skin. Expressed predominantly in the neonatal mouse spermatogonia.

The protein resides in the secreted. Growth factor of the TGF-beta superfamily that plays important role in various biological processes, including spermatogenesis, osteogenesis, steroidogenesis as well as regulation of energy balance. Initiates the canonical BMP signaling cascade by associating with type I receptor BMPR1A and type II receptor BMPR2. Once all three components are bound together in a complex at the cell surface, BMPR2 phosphorylates and activates BMPR1A. In turn, BMPR1A propagates signal by phosphorylating SMAD1/5/8 that travel to the nucleus and act as activators and repressors of transcription of target genes. In addition, activates the SMAD2/3 pathway. The chain is Bone morphogenetic protein 8A (Bmp8a) from Mus musculus (Mouse).